Consider the following 146-residue polypeptide: Small ribosomal subunit protein bS16 (146 aa).

Residues 84–102 show a composition bias toward basic and acidic residues; that stretch reads SHLEAQKAAVERLGRRKDY. A disordered region spans residues 84-146; the sequence is SHLEAQKAAV…DAPAAEATTE (63 aa). The span at 110–119 shows a compositional bias: low complexity; the sequence is APKAAPVAEA. Acidic residues predominate over residues 120 to 130; the sequence is PAEEAPAEEPA. Residues 131–146 show a composition bias toward low complexity; it reads AEASTDDAPAAEATTE.

Belongs to the bacterial ribosomal protein bS16 family.

This chain is Small ribosomal subunit protein bS16, found in Rhodopirellula baltica (strain DSM 10527 / NCIMB 13988 / SH1).